A 330-amino-acid chain; its full sequence is Ketol-acid reductoisomerase (NADP(+)) (330 aa).

The KARI N-terminal Rossmann domain maps to 2–182 (IHVYYDKDAN…GCTKAGVIET (181 aa)). NADP(+)-binding positions include 25–28 (YGSQ), R48, S51, S53, and 83–86 (DEVQ). Residue H108 is part of the active site. Position 134 (G134) interacts with NADP(+). Positions 183 to 328 (TFKEETETDL…KKLRDMMPWI (146 aa)) constitute a KARI C-terminal knotted domain. 4 residues coordinate Mg(2+): D191, E195, E227, and E231. Residue S252 coordinates substrate.

This sequence belongs to the ketol-acid reductoisomerase family. It depends on Mg(2+) as a cofactor.

The catalysed reaction is (2R)-2,3-dihydroxy-3-methylbutanoate + NADP(+) = (2S)-2-acetolactate + NADPH + H(+). The enzyme catalyses (2R,3R)-2,3-dihydroxy-3-methylpentanoate + NADP(+) = (S)-2-ethyl-2-hydroxy-3-oxobutanoate + NADPH + H(+). It functions in the pathway amino-acid biosynthesis; L-isoleucine biosynthesis; L-isoleucine from 2-oxobutanoate: step 2/4. It participates in amino-acid biosynthesis; L-valine biosynthesis; L-valine from pyruvate: step 2/4. Functionally, involved in the biosynthesis of branched-chain amino acids (BCAA). Catalyzes an alkyl-migration followed by a ketol-acid reduction of (S)-2-acetolactate (S2AL) to yield (R)-2,3-dihydroxy-isovalerate. In the isomerase reaction, S2AL is rearranged via a Mg-dependent methyl migration to produce 3-hydroxy-3-methyl-2-ketobutyrate (HMKB). In the reductase reaction, this 2-ketoacid undergoes a metal-dependent reduction by NADPH to yield (R)-2,3-dihydroxy-isovalerate. The sequence is that of Ketol-acid reductoisomerase (NADP(+)) from Halothermothrix orenii (strain H 168 / OCM 544 / DSM 9562).